The primary structure comprises 396 residues: Na(+)/H(+) antiporter NhaA 1 (396 aa).

Transmembrane regions (helical) follow at residues 15-35 (AGIF…VGFL), 60-80 (LEFW…GLEL), 96-116 (FLPS…FAVI), 126-146 (GWAI…ALLG), 155-175 (IFVL…IALF), 179-199 (ALNF…LVMC), 207-227 (IPFV…GIHA), 255-275 (SLGY…NAGV), 290-312 (PLGV…SWFL), 329-349 (LYAV…VDNL), and 363-383 (LAIL…AKAV).

The protein belongs to the NhaA Na(+)/H(+) (TC 2.A.33) antiporter family.

The protein resides in the cell inner membrane. The catalysed reaction is Na(+)(in) + 2 H(+)(out) = Na(+)(out) + 2 H(+)(in). Its function is as follows. Na(+)/H(+) antiporter that extrudes sodium in exchange for external protons. The protein is Na(+)/H(+) antiporter NhaA 1 of Campylobacter hominis (strain ATCC BAA-381 / DSM 21671 / CCUG 45161 / LMG 19568 / NCTC 13146 / CH001A).